Here is a 141-residue protein sequence, read N- to C-terminus: VLSGSDKTNVKGVFAKIGGHAEDYGAETLERMFITYPQTKTYFPHFDLQHGSAQIKGHGKKVVGALIEAANHIDDIAASLSKLSDLHAQKLRVDPVNFKLLGQCFLVVVAIHHPSVLTPEVHASLDKFLCAVGNVLTAKYR.

Residues 1–141 enclose the Globin domain; it reads VLSGSDKTNV…VGNVLTAKYR (141 aa). H58 lines the O2 pocket. A heme b-binding site is contributed by H87.

Belongs to the globin family. In terms of assembly, heterotetramer of two alpha chains and two beta chains. Red blood cells.

Its function is as follows. Involved in oxygen transport from the lung to the various peripheral tissues. This chain is Hemoglobin subunit alpha-A (HBAA), found in Vultur gryphus (Andean condor).